Here is a 200-residue protein sequence, read N- to C-terminus: Probable GTP-binding protein EngB (200 aa).

An EngB-type G domain is found at 23-197 (KNSEVVFIGR…RERVLKDVLG (175 aa)). Residues 31–38 (GRSNVGKS), 58–62 (GKTQL), 83–86 (DLPG), 153–156 (TKMD), and 175–177 (FTA) contribute to the GTP site. Ser-38 and Thr-60 together coordinate Mg(2+).

The protein belongs to the TRAFAC class TrmE-Era-EngA-EngB-Septin-like GTPase superfamily. EngB GTPase family. Mg(2+) serves as cofactor.

Necessary for normal cell division and for the maintenance of normal septation. The protein is Probable GTP-binding protein EngB of Wolinella succinogenes (strain ATCC 29543 / DSM 1740 / CCUG 13145 / JCM 31913 / LMG 7466 / NCTC 11488 / FDC 602W) (Vibrio succinogenes).